Here is a 56-residue protein sequence, read N- to C-terminus: Small ribosomal subunit protein uS14 (56 aa).

Cysteine 21, cysteine 24, cysteine 39, and cysteine 42 together coordinate Zn(2+).

The protein belongs to the universal ribosomal protein uS14 family. Zinc-binding uS14 subfamily. In terms of assembly, part of the 30S ribosomal subunit. It depends on Zn(2+) as a cofactor.

In terms of biological role, binds 16S rRNA, required for the assembly of 30S particles. In Pyrococcus abyssi (strain GE5 / Orsay), this protein is Small ribosomal subunit protein uS14.